Consider the following 312-residue polypeptide: Ribosomal RNA small subunit methyltransferase H (312 aa).

S-adenosyl-L-methionine is bound by residues 35–37 (GGH), Asp54, Phe81, Asp100, and Gln107.

Belongs to the methyltransferase superfamily. RsmH family.

It is found in the cytoplasm. It catalyses the reaction cytidine(1402) in 16S rRNA + S-adenosyl-L-methionine = N(4)-methylcytidine(1402) in 16S rRNA + S-adenosyl-L-homocysteine + H(+). Specifically methylates the N4 position of cytidine in position 1402 (C1402) of 16S rRNA. The polypeptide is Ribosomal RNA small subunit methyltransferase H (Campylobacter jejuni subsp. jejuni serotype O:2 (strain ATCC 700819 / NCTC 11168)).